The primary structure comprises 209 residues: Probable endopeptidase Cgl2188 (209 aa).

The first 35 residues, 1–35 (MGKHRRNNSNATRKAVAASAVALGATAAIASPAQA), serve as a signal peptide directing secretion. The 115-residue stretch at 95–209 (ASTGQAIVDA…YMPFHSAVRF (115 aa)) folds into the NlpC/P60 domain. Cys-125 functions as the Nucleophile in the catalytic mechanism. His-173 serves as the catalytic Proton acceptor. The active site involves His-185.

Belongs to the peptidase C40 family.

It localises to the secreted. The chain is Probable endopeptidase Cgl2188 from Corynebacterium glutamicum (strain ATCC 13032 / DSM 20300 / JCM 1318 / BCRC 11384 / CCUG 27702 / LMG 3730 / NBRC 12168 / NCIMB 10025 / NRRL B-2784 / 534).